We begin with the raw amino-acid sequence, 151 residues long: Methylglyoxal synthase (151 aa).

The 146-residue stretch at Arg6 to Thr151 folds into the MGS-like domain. Substrate contacts are provided by residues His19, Lys23, Thr45 to Thr48, and Ser65 to Gly66. The active-site Proton donor/acceptor is Asp71. His98 is a substrate binding site.

Belongs to the methylglyoxal synthase family.

It catalyses the reaction dihydroxyacetone phosphate = methylglyoxal + phosphate. Functionally, catalyzes the formation of methylglyoxal from dihydroxyacetone phosphate. The protein is Methylglyoxal synthase of Vibrio campbellii (strain ATCC BAA-1116).